Reading from the N-terminus, the 539-residue chain is MSLFNNHPELDFTMREMLIDWLINIYFDQNVEISNRSLVSGIMMIDRYIYLEKTSISRKMYQGIGVICLNLACKLDDTKILGLDYCEYICAGIYTADILSNLEKRILKVFKFGLHFKNILHYIKLISIKENVDDTVYVFARLMLITILFKTNYLTIKTKSMAKNLMNFSKWFVNNKNVEIKNPIHIYFFTELRRYITHPHFTSINRLAKEFRIFSLIKSRIPNIIYLEKPNVFSKEIIPIELQNSLTIEYTENQLNNMNVIEKLGIGSFGLVNKVKFDNTEIALKTHHPDDSKEIIVESLREINNMIMLDHPNIIKMHGYYYSQGITHIGLELCDMPLYKKLDKGNLSPELKKSFIIQLLCGLKYLHNNNIIHRDLTSSNVLIKGDTLKICDFGCSRFVYDKKIIGNYSLDVCSVRYRAIEILNGILPYNEKIDIWSCACLIAEILGEKFLFRGRNEIEVLDSINRLLGKTVGSGRVGFSMLEKHYPNETQIIYKMLDFDPSNRPNAKLVLKIFSECFVAQSELLVNNQKTTIDKNQIS.

A Cyclin N-terminal domain is found at 1-115 (MSLFNNHPEL…ILKVFKFGLH (115 aa)). A Protein kinase domain is found at 258–519 (MNVIEKLGIG…VLKIFSECFV (262 aa)). ATP is bound by residues 264–272 (LGIGSFGLV) and lysine 285. Aspartate 375 acts as the Proton acceptor in catalysis.

The protein belongs to the protein kinase superfamily. Ser/Thr protein kinase family.

The enzyme catalyses L-seryl-[protein] + ATP = O-phospho-L-seryl-[protein] + ADP + H(+). It carries out the reaction L-threonyl-[protein] + ATP = O-phospho-L-threonyl-[protein] + ADP + H(+). This is Putative serine/threonine-protein kinase L670 from Acanthamoeba polyphaga mimivirus (APMV).